Here is a 270-residue protein sequence, read N- to C-terminus: Diaminopimelate epimerase (270 aa).

Positions 15, 49, and 66 each coordinate substrate. Catalysis depends on Cys75, which acts as the Proton donor. Substrate contacts are provided by residues 76–77 (GN), Asn155, Asn187, and 204–205 (ER). Residue Cys213 is the Proton acceptor of the active site. Position 214-215 (214-215 (GS)) interacts with substrate.

This sequence belongs to the diaminopimelate epimerase family. In terms of assembly, homodimer.

The protein localises to the cytoplasm. The catalysed reaction is (2S,6S)-2,6-diaminopimelate = meso-2,6-diaminopimelate. It participates in amino-acid biosynthesis; L-lysine biosynthesis via DAP pathway; DL-2,6-diaminopimelate from LL-2,6-diaminopimelate: step 1/1. In terms of biological role, catalyzes the stereoinversion of LL-2,6-diaminopimelate (L,L-DAP) to meso-diaminopimelate (meso-DAP), a precursor of L-lysine and an essential component of the bacterial peptidoglycan. In Rickettsia conorii (strain ATCC VR-613 / Malish 7), this protein is Diaminopimelate epimerase.